We begin with the raw amino-acid sequence, 142 residues long: Universal stress protein G (142 aa).

Belongs to the universal stress protein A family.

This chain is Universal stress protein G (uspG), found in Shigella flexneri.